Reading from the N-terminus, the 393-residue chain is Lipid-A-disaccharide synthase (393 aa).

This sequence belongs to the LpxB family.

The catalysed reaction is a lipid X + a UDP-2-N,3-O-bis[(3R)-3-hydroxyacyl]-alpha-D-glucosamine = a lipid A disaccharide + UDP + H(+). Its pathway is bacterial outer membrane biogenesis; LPS lipid A biosynthesis. Condensation of UDP-2,3-diacylglucosamine and 2,3-diacylglucosamine-1-phosphate to form lipid A disaccharide, a precursor of lipid A, a phosphorylated glycolipid that anchors the lipopolysaccharide to the outer membrane of the cell. This Granulibacter bethesdensis (strain ATCC BAA-1260 / CGDNIH1) protein is Lipid-A-disaccharide synthase.